The following is a 78-amino-acid chain: High temperature lethal protein 1 (78 aa).

S2 carries the post-translational modification N-acetylserine.

Interacts directly with RSC8. Component of the two forms of the RSC complex composed of at least either RSC1 or RSC2, and ARP7, ARP9, LDB7, NPL6, RSC3, RSC30, RSC4, RSC58, RSC6, RSC8, RSC9, SFH1, STH1, HTL1 and probably RTT102. The complexes interact with histone and histone variant components of centromeric chromatin. Component of a fungal-specific module (HTL1-LDB7-NPL6-RSC3-RSC30) within the RSC complex.

It is found in the nucleus. Required for cell cycle progression through G2/M transition at temperatures higher than 33 degrees Celsius. Component of the chromatin structure-remodeling complex (RSC), which is involved in transcription regulation and nucleosome positioning. RSC is responsible for the transfer of a histone octamer from a nucleosome core particle to naked DNA. The reaction requires ATP and involves an activated RSC-nucleosome intermediate. Remodeling reaction also involves DNA translocation, DNA twist and conformational change. As a reconfigurer of centromeric and flanking nucleosomes, RSC complex is required both for proper kinetochore function in chromosome segregation and, via a PKC1-dependent signaling pathway, for organization of the cellular cytoskeleton. When associated with the RSC complex, may act coordinately with PKC1 to regulate G2/M transition. Together with LDB7, NPL6, RSC3, RSC30 components, defines a fungal-specific module within the RSC complex that plays a role in many cellular functions including the maintenance of cell wall integrity. The protein is High temperature lethal protein 1 (HTL1) of Saccharomyces cerevisiae (strain ATCC 204508 / S288c) (Baker's yeast).